Here is a 122-residue protein sequence, read N- to C-terminus: Large ribosomal subunit protein uL14 (122 aa).

The protein belongs to the universal ribosomal protein uL14 family. Part of the 50S ribosomal subunit. Forms a cluster with proteins L3 and L19. In the 70S ribosome, L14 and L19 interact and together make contacts with the 16S rRNA in bridges B5 and B8.

In terms of biological role, binds to 23S rRNA. Forms part of two intersubunit bridges in the 70S ribosome. The chain is Large ribosomal subunit protein uL14 from Mycoplasma genitalium (strain ATCC 33530 / DSM 19775 / NCTC 10195 / G37) (Mycoplasmoides genitalium).